The primary structure comprises 160 residues: Putative UPF0479 protein YNL339W-B (160 aa).

2 helical membrane passes run 39-59 (IVFC…KVLQ) and 136-156 (VPMI…ISQH).

This sequence belongs to the UPF0479 family.

The protein resides in the membrane. The chain is Putative UPF0479 protein YNL339W-B from Saccharomyces cerevisiae (strain ATCC 204508 / S288c) (Baker's yeast).